The following is a 128-amino-acid chain: Large-conductance mechanosensitive channel (128 aa).

2 helical membrane-spanning segments follow: residues 11–31 (FALKGNVLDLAVAVVIGAAFG) and 70–90 (GAFIQSIVDFVIIAFAIFIFV).

It belongs to the MscL family. In terms of assembly, homopentamer.

It is found in the cell membrane. Its function is as follows. Channel that opens in response to stretch forces in the membrane lipid bilayer. May participate in the regulation of osmotic pressure changes within the cell. This chain is Large-conductance mechanosensitive channel, found in Listeria innocua serovar 6a (strain ATCC BAA-680 / CLIP 11262).